A 671-amino-acid chain; its full sequence is DEAD-box ATP-dependent RNA helicase 7 (671 aa).

The segment at 1–84 is disordered; it reads MPSLMLSDKK…EKKKSSKKVK (84 aa). Over residues 26–41 the composition is skewed to basic and acidic residues; it reads LDSKKGKKEQKLKLSD. 2 positions are modified to phosphoserine: Ser-40 and Ser-42. Residues 50-60 are compositionally biased toward basic residues; sequence KKSKKKDKKRK. A Q motif motif is present at residues 96 to 124; that stretch reads NAVSKFRISAPLREKLKANGIEALFPIQA. Residues 127 to 309 form the Helicase ATP-binding domain; sequence FDMVLDGADL…NRFLKRDQKT (183 aa). Residue 140–147 coordinates ATP; it reads ARTGQGKT. Residues 255–258 carry the DEAD box motif; it reads DEAD. One can recognise a Helicase C-terminal domain in the interval 339 to 479; it reads LIPDIISCYS…HLAAPQPDEI (141 aa). A disordered region spans residues 627-671; it reads EREPLPQKRFGGGGRGNRFGGGGGNRFGGGGGRGRGGSGGRGQRY. Over residues 636 to 671 the composition is skewed to gly residues; that stretch reads FGGGGRGNRFGGGGGNRFGGGGGRGRGGSGGRGQRY.

This sequence belongs to the DEAD box helicase family. DDX21/DDX50 subfamily.

The protein resides in the nucleus. The enzyme catalyses ATP + H2O = ADP + phosphate + H(+). The chain is DEAD-box ATP-dependent RNA helicase 7 (RH7) from Arabidopsis thaliana (Mouse-ear cress).